We begin with the raw amino-acid sequence, 435 residues long: Probable E3 ubiquitin-protein ligase makorin-1 (435 aa).

C3H1-type zinc fingers lie at residues 18–45 (WTKH…HDLT) and 48–75 (KPAA…HCKP). The tract at residues 81–109 (LPAPQMLPLPSASLAGPSDPEPSGPTPVP) is disordered. A compositionally biased stretch (pro residues) spans 99–108 (DPEPSGPTPV). A C3H1-type 3 zinc finger spans residues 155–182 (QLRKQLCPYAAVGECRYGINCAYLHGDV). The segment at 183-210 (CYMCGLQVLHPTDNNQRSEHTKACIEAH) is makorin-type Cys-His. Residues 228 to 282 (CGVCMEVVFEKANPSERRFGILSNCSHCYCLKCIRKWRSAKQFESKIIKSCPECR) form an RING-type zinc finger. Residues 311–340 (GMGSKPCRYFDEGRGTCPFGSNCFYKHAFP) form a C3H1-type 4 zinc finger. A disordered region spans residues 345-369 (EEAQPQRRQTGSNSRNRNSRRTPLW).

As to expression, weakly expressed in adult brain, heart and kidney.

The catalysed reaction is S-ubiquitinyl-[E2 ubiquitin-conjugating enzyme]-L-cysteine + [acceptor protein]-L-lysine = [E2 ubiquitin-conjugating enzyme]-L-cysteine + N(6)-ubiquitinyl-[acceptor protein]-L-lysine.. The protein operates within protein modification; protein ubiquitination. In terms of biological role, E3 ubiquitin ligase catalyzing the covalent attachment of ubiquitin moieties onto substrate proteins. This Seriola quinqueradiata (Five-ray yellowtail) protein is Probable E3 ubiquitin-protein ligase makorin-1.